We begin with the raw amino-acid sequence, 784 residues long: Lon protease (784 aa).

The 202-residue stretch at L6–I207 folds into the Lon N-terminal domain. G356–T363 provides a ligand contact to ATP. The region spanning E592–E773 is the Lon proteolytic domain. Catalysis depends on residues S679 and K722.

The protein belongs to the peptidase S16 family. Homohexamer. Organized in a ring with a central cavity.

The protein resides in the cytoplasm. It carries out the reaction Hydrolysis of proteins in presence of ATP.. In terms of biological role, ATP-dependent serine protease that mediates the selective degradation of mutant and abnormal proteins as well as certain short-lived regulatory proteins. Required for cellular homeostasis and for survival from DNA damage and developmental changes induced by stress. Degrades polypeptides processively to yield small peptide fragments that are 5 to 10 amino acids long. Binds to DNA in a double-stranded, site-specific manner. The chain is Lon protease from Rickettsia prowazekii (strain Madrid E).